A 319-amino-acid polypeptide reads, in one-letter code: Solute carrier family 25 member 34 (319 aa).

Residues 1–22 (MNSAFSGPSSPTPGPSPPRPPL) form a disordered region. Positions 10–22 (SPTPGPSPPRPPL) are enriched in pro residues. Solcar repeat units lie at residues 22–115 (LWPP…MQAA), 119–212 (DGPC…AKDW), and 222–313 (LSSL…LRQR). The next 6 helical transmembrane spans lie at 25-45 (PLDF…TNPL), 63-83 (SYRR…RTDG), 116-138 (GVTD…GAFI), 188-209 (VNGA…FSSA), 224-244 (SLNT…IMTP), and 296-319 (LAPH…PYTH).

Belongs to the mitochondrial carrier (TC 2.A.29) family.

It is found in the mitochondrion inner membrane. This chain is Solute carrier family 25 member 34 (slc25a34), found in Danio rerio (Zebrafish).